A 148-amino-acid polypeptide reads, in one-letter code: Arginine repressor (148 aa).

It belongs to the ArgR family.

The protein localises to the cytoplasm. Its pathway is amino-acid biosynthesis; L-arginine biosynthesis [regulation]. Its function is as follows. Regulates arginine biosynthesis genes. The sequence is that of Arginine repressor from Chlorobium phaeovibrioides (strain DSM 265 / 1930) (Prosthecochloris vibrioformis (strain DSM 265)).